Here is a 280-residue protein sequence, read N- to C-terminus: Beta-lactamase OXA-58 (280 aa).

The first 18 residues, 1–18, serve as a signal peptide directing secretion; that stretch reads MKLLKILSLVCLSISIGA. Cys-19 carries N-palmitoyl cysteine lipidation. Residue Cys-19 is the site of S-diacylglycerol cysteine attachment. Residue Ser-83 is the Acyl-ester intermediate of the active site. Ser-83, Lys-86, Ser-130, Ser-221, Trp-223, and Arg-263 together coordinate a beta-lactam. The residue at position 86 (Lys-86) is an N6-carboxylysine.

Belongs to the class-D beta-lactamase family. In terms of assembly, monomer. Dimer. Carboxylated on the epsilon-amino group of a lysine, with the resulting carbamate functional group serving as a general base. Probably N-carboxylated at Lys-86 at neutral pH in vivo and undergoes complete N-decarboxylation, at pH 4.1, in vitro. N-carboxylation at Lys-86 probably increases catalytic activity under physiological conditions.

Its subcellular location is the cell membrane. The catalysed reaction is a beta-lactam + H2O = a substituted beta-amino acid. Activated approximately 3-fold by the presence of 0.1M NaHCO3. Functionally, class D beta-lactamase which confers resistance to the beta-lactam antibiotics, including penicillins and oxacillin, and moderate resistance to carbapenems such as imipenem; in the DH10B strain of E.coli. Acts via hydrolysis of the beta-lactam ring. Has benzylpenicillin-, oxacillin-, cephalothin- and imipenem-hydrolyzing activities. The protein is Beta-lactamase OXA-58 of Acinetobacter baumannii.